The following is a 130-amino-acid chain: Small ribosomal subunit protein uS11 (130 aa).

Residues 109 to 130 (EDITPIPHDGTGRPGGKRGRRV) form a disordered region.

The protein belongs to the universal ribosomal protein uS11 family. In terms of assembly, part of the 30S ribosomal subunit.

Its function is as follows. Located on the platform of the 30S subunit. The chain is Small ribosomal subunit protein uS11 from Methanobrevibacter smithii (strain ATCC 35061 / DSM 861 / OCM 144 / PS).